Reading from the N-terminus, the 197-residue chain is Phosphoheptose isomerase (197 aa).

Positions 34 to 196 (MVHCLLGGNK…DRTLFPQDEQ (163 aa)) constitute an SIS domain. 49-51 (NGG) provides a ligand contact to substrate. The Zn(2+) site is built by histidine 58 and glutamate 62. Residues glutamate 62, 91-92 (ND), 117-119 (STS), serine 122, and glutamine 172 each bind substrate. Zn(2+)-binding residues include glutamine 172 and histidine 180.

Belongs to the SIS family. GmhA subfamily. In terms of assembly, homotetramer. Zn(2+) serves as cofactor.

Its subcellular location is the cytoplasm. It catalyses the reaction 2 D-sedoheptulose 7-phosphate = D-glycero-alpha-D-manno-heptose 7-phosphate + D-glycero-beta-D-manno-heptose 7-phosphate. It participates in carbohydrate biosynthesis; D-glycero-D-manno-heptose 7-phosphate biosynthesis; D-glycero-alpha-D-manno-heptose 7-phosphate and D-glycero-beta-D-manno-heptose 7-phosphate from sedoheptulose 7-phosphate: step 1/1. Catalyzes the isomerization of sedoheptulose 7-phosphate in D-glycero-D-manno-heptose 7-phosphate. The sequence is that of Phosphoheptose isomerase from Shewanella sediminis (strain HAW-EB3).